A 288-amino-acid chain; its full sequence is Bifunctional protein FolD 2 (288 aa).

Residues 166–168 (GRS) and Ser-191 each bind NADP(+).

The protein belongs to the tetrahydrofolate dehydrogenase/cyclohydrolase family. As to quaternary structure, homodimer.

It catalyses the reaction (6R)-5,10-methylene-5,6,7,8-tetrahydrofolate + NADP(+) = (6R)-5,10-methenyltetrahydrofolate + NADPH. The enzyme catalyses (6R)-5,10-methenyltetrahydrofolate + H2O = (6R)-10-formyltetrahydrofolate + H(+). It participates in one-carbon metabolism; tetrahydrofolate interconversion. In terms of biological role, catalyzes the oxidation of 5,10-methylenetetrahydrofolate to 5,10-methenyltetrahydrofolate and then the hydrolysis of 5,10-methenyltetrahydrofolate to 10-formyltetrahydrofolate. This is Bifunctional protein FolD 2 from Frankia casuarinae (strain DSM 45818 / CECT 9043 / HFP020203 / CcI3).